The following is a 302-amino-acid chain: Recombination-associated protein RdgC (302 aa).

The protein belongs to the RdgC family.

The protein localises to the cytoplasm. It is found in the nucleoid. May be involved in recombination. The polypeptide is Recombination-associated protein RdgC (Actinobacillus succinogenes (strain ATCC 55618 / DSM 22257 / CCUG 43843 / 130Z)).